A 618-amino-acid polypeptide reads, in one-letter code: Rho guanine nucleotide exchange factor 25 (618 aa).

Disordered stretches follow at residues 26–63 (CAVP…REPE) and 169–193 (GPGD…EEQK). In terms of domain architecture, DH spans 199 to 375 (RSMFVLGELV…CFVPKRCNDM (177 aa)). Residues 317 to 338 (LGHRLQLNDLLIKPVQRIMKYQ) are important for binding to Rho GTPases. The 119-residue stretch at 387-505 (KLTAQGKLLG…WIKQVAQILE (119 aa)) folds into the PH domain. The sufficient to bind activated GNAQ stretch occupies residues 506–532 (SQRDFLNALQSPIEYQRRESQTNSLGR). Disordered stretches follow at residues 521–556 (QRRE…SMHT) and 584–604 (ALSD…VNTP). Residues 584–593 (ALSDTPQTPH) are compositionally biased toward polar residues.

Interacts with activated GNAQ and GNA11. Interacts (via the DH domain) with POPDC1 (via the C-terminus cytoplasmic tail). Interacts with RHOA, CDC42 and RAC1. In terms of tissue distribution, highly expressed in excitable tissues, such as brain, heart and muscle. Elevated expression in hippocampus and cerebellum.

It is found in the cytoplasm. The protein resides in the myofibril. It localises to the sarcomere. The protein localises to the cell membrane. May play a role in actin cytoskeleton reorganization in different tissues since its activation induces formation of actin stress fibers. It works as a guanine nucleotide exchange factor for Rho family of small GTPases. Links specifically G alpha q/11-coupled receptors to RHOA activation. May be an important regulator of processes involved in axon and dendrite formation. In neurons seems to be an exchange factor primarily for RAC1. Involved in skeletal myogenesis. This is Rho guanine nucleotide exchange factor 25 (Arhgef25) from Mus musculus (Mouse).